A 318-amino-acid polypeptide reads, in one-letter code: Large ribosomal subunit protein uL10 (318 aa).

Position 24 is a phosphotyrosine (tyrosine 24). At threonine 59 the chain carries Phosphothreonine. Lysine 264 participates in a covalent cross-link: Glycyl lysine isopeptide (Lys-Gly) (interchain with G-Cter in ubiquitin). A Glycyl lysine isopeptide (Lys-Gly) (interchain with G-Cter in SUMO1); alternate cross-link involves residue lysine 298. Lysine 298 participates in a covalent cross-link: Glycyl lysine isopeptide (Lys-Gly) (interchain with G-Cter in SUMO2); alternate. The disordered stretch occupies residues 298 to 318; that stretch reads KVEAKEESEESDEDMGFGLFD. The segment covering 303–312 has biased composition (acidic residues); the sequence is EESEESDEDM. 2 positions are modified to phosphoserine: serine 305 and serine 308.

It belongs to the universal ribosomal protein uL10 family. In terms of assembly, P0 forms a pentameric complex by interaction with dimers of P1 and P2. Identified in a IGF2BP1-dependent mRNP granule complex containing untranslated mRNAs. Interacts with APEX1. Interacts with FMR1 isoform 6. Ubiquitinated at Lys-264 by RNF14 and RNF25 in response to ribosome collisions (ribosome stalling).

It is found in the nucleus. The protein localises to the cytoplasm. Ribosomal protein P0 is the functional equivalent of E.coli protein L10. This chain is Large ribosomal subunit protein uL10 (RPLP0), found in Oryctolagus cuniculus (Rabbit).